Reading from the N-terminus, the 433-residue chain is Enolase 2 (433 aa).

Residues 34-56 (RGMVPSGASTGEHEAVELRDGDK) are disordered. Residues 44 to 56 (GEHEAVELRDGDK) are compositionally biased toward basic and acidic residues. Q163 is a (2R)-2-phosphoglycerate binding site. The Proton donor role is filled by E205. Residues D243, E290, and D317 each contribute to the Mg(2+) site. (2R)-2-phosphoglycerate is bound by residues K342, R371, S372, and K393. K342 functions as the Proton acceptor in the catalytic mechanism.

The protein belongs to the enolase family. Requires Mg(2+) as cofactor.

Its subcellular location is the cytoplasm. The protein localises to the secreted. It is found in the cell surface. It carries out the reaction (2R)-2-phosphoglycerate = phosphoenolpyruvate + H2O. The protein operates within carbohydrate degradation; glycolysis; pyruvate from D-glyceraldehyde 3-phosphate: step 4/5. Catalyzes the reversible conversion of 2-phosphoglycerate (2-PG) into phosphoenolpyruvate (PEP). It is essential for the degradation of carbohydrates via glycolysis. This Lactococcus lactis subsp. cremoris (strain SK11) protein is Enolase 2.